We begin with the raw amino-acid sequence, 453 residues long: tRNA modification GTPase MnmE (453 aa).

Positions 22, 79, and 119 each coordinate (6S)-5-formyl-5,6,7,8-tetrahydrofolate. A TrmE-type G domain is found at 215 to 376; that stretch reads GMKVVIAGRP…LREHLKACMG (162 aa). A K(+)-binding site is contributed by N225. GTP is bound by residues 225-230, 244-250, 269-272, and 334-337; these read NAGKSS, TEIAGTT, DTAG, and NKAD. S229 contributes to the Mg(2+) binding site. Residues T244, I246, and T249 each coordinate K(+). T250 provides a ligand contact to Mg(2+). K453 lines the (6S)-5-formyl-5,6,7,8-tetrahydrofolate pocket.

Belongs to the TRAFAC class TrmE-Era-EngA-EngB-Septin-like GTPase superfamily. TrmE GTPase family. As to quaternary structure, homodimer. Heterotetramer of two MnmE and two MnmG subunits. The cofactor is K(+).

Its subcellular location is the cytoplasm. Its function is as follows. Exhibits a very high intrinsic GTPase hydrolysis rate. Involved in the addition of a carboxymethylaminomethyl (cmnm) group at the wobble position (U34) of certain tRNAs, forming tRNA-cmnm(5)s(2)U34. This chain is tRNA modification GTPase MnmE, found in Aeromonas hydrophila subsp. hydrophila (strain ATCC 7966 / DSM 30187 / BCRC 13018 / CCUG 14551 / JCM 1027 / KCTC 2358 / NCIMB 9240 / NCTC 8049).